Reading from the N-terminus, the 180-residue chain is Large ribosomal subunit protein uL5c (180 aa).

It belongs to the universal ribosomal protein uL5 family. In terms of assembly, part of the 50S ribosomal subunit; contacts the 5S rRNA.

Its subcellular location is the plastid. The protein localises to the chloroplast. In terms of biological role, binds 5S rRNA, forms part of the central protuberance of the 50S subunit. In Stigeoclonium helveticum (Green alga), this protein is Large ribosomal subunit protein uL5c (rpl5).